The primary structure comprises 473 residues: DNA-binding protein (473 aa).

Disordered stretches follow at residues 1–69 (MAGR…GFSH) and 85–111 (RRLE…SKAV). The segment covering 7-18 (ELPTITPYLQET) has biased composition (polar residues). The span at 53 to 62 (PDSEEEEEEV) shows a compositional bias: acidic residues. A Phosphotyrosine; by host modification is found at Tyr-141. 2 residues coordinate Zn(2+): Cys-230 and His-232. The segment at 243–277 (VEMDVASENAQRALKEHPSRAKVVQNRWGRSVVQL) is flexible loop. Residues Cys-285, Cys-301, Cys-342, Cys-344, Cys-396, and Cys-412 each contribute to the Zn(2+) site. The tract at residues 459 to 473 (VALPASHGDGEKEPF) is C-terminal arm, DBP binding.

Belongs to the adenoviridae E2A DNA-binding protein family. Homomultimerizes on viral ssDNA bound to pTP. Forms a initiation complex with viral polymerase, pTP and hosts NFIA and POU2F1/OCT1. Interacts with host SRCAP.

The protein localises to the host nucleus. Functionally, plays a role in the elongation phase of viral strand displacement replication by unwinding the template in an ATP-independent fashion, employing its capacity to form multimers. Also enhances the rate of initiation. Released from template upon second strand synthesis. Assembles in complex with viral pTP, viral pol, host NFIA and host POU2F1/OCT1 on viral origin of replication. Covers the whole ssDNA genome during synthesis. The complementary strand synthesis induces its relese from DNA template. May inhibit cellular transcription mediated by the interaction between host SRCAP and CBP. The chain is DNA-binding protein from Homo sapiens (Human).